Consider the following 355-residue polypeptide: MNKKVVIGMSGGVDSSVAAYLLKEQGYDVIGVTMKLTPDDAFYTEQEGGCCSLSAVEDARRVAYRIGIPFYVVNFTDIFKEKVIDYFTEEYLNGKTPNPCIACNKYIKFDALLKKAESLGADYIATGHYCRIVEENGRYVIRKSEDEKKDQTYVMYNMTQDQLKHTLMPCGDYKKDRIREIAREIGLNVFDKKDSEEICFIPDNDHGGFIKRECPKAVKTGNFVDKEGKVLGKHKGIIYYTIGQRKGLGIATGKRVFVTNIDAMKNQVVIGEEEEIFENELISFKNNFIPFDKLTEPMEVDAKIRYNAKASKATIYPVDDENVKVKFEKPQRAITKGQSVVFYDGDLLVGGGIIK.

ATP-binding positions include 8-15 (GMSGGVDS) and methionine 34. The active-site Nucleophile is cysteine 103. An intrachain disulfide couples cysteine 103 to cysteine 199. Glycine 127 contacts ATP. Residues 149 to 151 (KDQ) form an interaction with tRNA region. The active-site Cysteine persulfide intermediate is the cysteine 199. An interaction with tRNA region spans residues 305–306 (RY).

Belongs to the MnmA/TRMU family.

It is found in the cytoplasm. The catalysed reaction is S-sulfanyl-L-cysteinyl-[protein] + uridine(34) in tRNA + AH2 + ATP = 2-thiouridine(34) in tRNA + L-cysteinyl-[protein] + A + AMP + diphosphate + H(+). In terms of biological role, catalyzes the 2-thiolation of uridine at the wobble position (U34) of tRNA, leading to the formation of s(2)U34. This is tRNA-specific 2-thiouridylase MnmA from Clostridium acetobutylicum (strain ATCC 824 / DSM 792 / JCM 1419 / IAM 19013 / LMG 5710 / NBRC 13948 / NRRL B-527 / VKM B-1787 / 2291 / W).